A 286-amino-acid chain; its full sequence is Meteorin-like protein (286 aa).

The first 20 residues, 1–20, serve as a signal peptide directing secretion; sequence MLRRGLLSFFMVILIDRGTS. Cystine bridges form between cysteine 28–cysteine 51, cysteine 84–cysteine 120, cysteine 165–cysteine 235, cysteine 168–cysteine 259, and cysteine 178–cysteine 281. N-linked (GlcNAc...) asparagine glycosylation occurs at asparagine 203.

The protein belongs to the meteorin family.

It localises to the secreted. Its function is as follows. Hormone induced following exercise or cold exposure that promotes energy expenditure. Induced either in the skeletal muscle after exercise or in adipose tissue following cold exposure and is present in the circulation. Able to stimulate energy expenditure associated with the browning of the white fat depots and improves glucose tolerance. This chain is Meteorin-like protein (metrnl), found in Xenopus laevis (African clawed frog).